Here is a 101-residue protein sequence, read N- to C-terminus: Phosphoribosyl-AMP cyclohydrolase (101 aa).

Mg(2+) is bound at residue Asp-71. Cys-72 lines the Zn(2+) pocket. Mg(2+) contacts are provided by Asp-73 and Asp-75. 2 residues coordinate Zn(2+): Cys-88 and Cys-95.

This sequence belongs to the PRA-CH family. As to quaternary structure, homodimer. The cofactor is Mg(2+). Requires Zn(2+) as cofactor.

It is found in the cytoplasm. It carries out the reaction 1-(5-phospho-beta-D-ribosyl)-5'-AMP + H2O = 1-(5-phospho-beta-D-ribosyl)-5-[(5-phospho-beta-D-ribosylamino)methylideneamino]imidazole-4-carboxamide. Its pathway is amino-acid biosynthesis; L-histidine biosynthesis; L-histidine from 5-phospho-alpha-D-ribose 1-diphosphate: step 3/9. Functionally, catalyzes the hydrolysis of the adenine ring of phosphoribosyl-AMP. The sequence is that of Phosphoribosyl-AMP cyclohydrolase from Bacillus cereus (strain 03BB102).